The sequence spans 438 residues: Chaperone SurA (438 aa).

The signal sequence occupies residues 1–28; the sequence is MKTMNPYIRHLILLICCLGGMLAQPLSA. 2 PpiC domains span residues 181–282 and 292–390; these read EEEY…KLVS and VQQT…QVLE.

It localises to the periplasm. It carries out the reaction [protein]-peptidylproline (omega=180) = [protein]-peptidylproline (omega=0). Its function is as follows. Chaperone involved in the correct folding and assembly of outer membrane proteins. Recognizes specific patterns of aromatic residues and the orientation of their side chains, which are found more frequently in integral outer membrane proteins. May act in both early periplasmic and late outer membrane-associated steps of protein maturation. In Dechloromonas aromatica (strain RCB), this protein is Chaperone SurA.